Consider the following 279-residue polypeptide: Threonylcarbamoyl-AMP synthase (279 aa).

The N-terminal 55 residues, 1-55, are a transit peptide targeting the mitochondrion; it reads MSPARRCRGMRAAVAASVGLSEGPAGSRSGRLFRPPSPAPAAPGARLLRLPGSGA. The tract at residues 21-41 is disordered; it reads SEGPAGSRSGRLFRPPSPAPA. Phosphoserine is present on Ser60. Residues 67-257 form the YrdC-like domain; it reads TEALRAAVAE…KFGIIRPGCA (191 aa).

It belongs to the SUA5 family. In terms of assembly, interacts with RSC1A1. As to expression, ubiquitously expressed.

It localises to the cytoplasm. It is found in the mitochondrion. The protein localises to the cell membrane. It carries out the reaction L-threonine + hydrogencarbonate + ATP = L-threonylcarbamoyladenylate + diphosphate + H2O. Its function is as follows. Cytoplasmic and mitochondrial threonylcarbamoyl-AMP synthase required for the formation of a threonylcarbamoyl group on adenosine at position 37 (t(6)A37) in tRNAs that read codons beginning with adenine. Catalyzes the conversion of L-threonine, HCO(3)(-)/CO(2) and ATP to give threonylcarbamoyl-AMP (TC-AMP) as the acyladenylate intermediate, with the release of diphosphate. Participates in t(6)A37 formation in cytoplasmic and mitochondrial tRNAs. May regulate the activity of some transporters. The chain is Threonylcarbamoyl-AMP synthase from Homo sapiens (Human).